The sequence spans 299 residues: AT-hook motif nuclear-localized protein 25 (299 aa).

Disordered stretches follow at residues 1-87 (MSSY…RDSP) and 216-251 (EEETPPPRTTGVQQQQPEASQSSEVTGSGAQACESN). Basic and acidic residues-rich tracts occupy residues 14–23 (HLQRPEDSRT) and 33–42 (NRSEADEAKA). Composition is skewed to low complexity over residues 44–72 (TTPTGGATSSATASGSSSGRRPRGRPAGS) and 224–239 (TTGVQQQQPEASQSSE). Positions 63-75 (RRPRGRPAGSKNK) form a DNA-binding region, a.T hook. Residues 87-233 (PNVLRSHVLE…TTGVQQQQPE (147 aa)) form the PPC domain. Residues 240-251 (VTGSGAQACESN) show a composition bias toward polar residues.

As to quaternary structure, homodimer. Interacts with AHL27 and AHL29. As to expression, expressed in seedlings, leaves, stems, floral tips and flowers.

Its subcellular location is the nucleus. Transcription factor that specifically binds AT-rich DNA sequences related to the nuclear matrix attachment regions (MARs). Binds the DNA sequence GNFEI (GA-negative feedback element I) in the GA3OX1 promoter. Binding to GNFEI sequence is required for GA-negative feedback regulation of GA3OX1. This is AT-hook motif nuclear-localized protein 25 from Arabidopsis thaliana (Mouse-ear cress).